Reading from the N-terminus, the 227-residue chain is UPF0758 protein PG_0894 (227 aa).

The region spanning 104–227 is the MPN domain; it reads SITDSRMAYR…YFSFADEGLL (124 aa). The Zn(2+) site is built by His-175, His-177, and Asp-188. The JAMM motif signature appears at 175–188; that stretch reads HNHPSGTVRPSEQD.

This sequence belongs to the UPF0758 family.

The sequence is that of UPF0758 protein PG_0894 from Porphyromonas gingivalis (strain ATCC BAA-308 / W83).